A 493-amino-acid polypeptide reads, in one-letter code: MAVLGITVALLGWMVILLFISVWKQIHSSWNLPPGPFPLPIIGNLLQLDLKDIPKSFGRLAERFGPVFTVYLGSRRVVVLHGYKAVREMLLNHKNEFSGRGEIPAFREFKDKGIIFNNGPTWKDTRRFSLTTLRDYGMGKQGNEDRIQKEAHFLLEELRKTQGQPFDPTFVIGCTPFNVIAKILFNDRFDYKDKQALRLMSLFNENFYLLSTPWLQVYNNFSNYLQYMPGSHRKVIKNVSEIKEYTLARVKEHHKSLDPSCPRDFIDSLLIEMEKDKHSTEPLYTLENIAVTVADMFFAGTETTSTTLRYGLLILLKHPEIEEKLHEEIDRVIGPSRMPSVRDRVQMPYMDAVVHEIQRFIDLVPSNLPHEATRDTTFQGYVIPKGTVVIPTLDSLLYDKQEFPDPEKFKPEHFLNEEGKFKYSDYFKPFSAGKRVCVGEGLARMELFLLLSAILQHFNLKPLVDPEDIDLRNITVGFGRVPPRYKLCVIPRS.

298–303 (FAGTET) serves as a coordination point for substrate. Cys437 is a binding site for heme.

The protein belongs to the cytochrome P450 family. As to quaternary structure, interacts with chaperones HSP70 and HSP90; this interaction is required for initial targeting to mitochondria. The cofactor is heme.

The protein resides in the endoplasmic reticulum membrane. Its subcellular location is the microsome membrane. The protein localises to the mitochondrion inner membrane. It catalyses the reaction an organic molecule + reduced [NADPH--hemoprotein reductase] + O2 = an alcohol + oxidized [NADPH--hemoprotein reductase] + H2O + H(+). The enzyme catalyses (5Z,8Z,11Z)-eicosatrienoate + reduced [NADPH--hemoprotein reductase] + O2 = 19-hydroxy-(5Z,8Z,11Z)-eicosatrienoate + oxidized [NADPH--hemoprotein reductase] + H2O + H(+). It carries out the reaction (5Z,8Z,11Z,14Z,17Z)-eicosapentaenoate + reduced [NADPH--hemoprotein reductase] + O2 = 19-hydroxy-(5Z,8Z,11Z,14Z,17Z)-eicosapentaenoate + oxidized [NADPH--hemoprotein reductase] + H2O + H(+). The catalysed reaction is (4Z,7Z,10Z,13Z,16Z,19Z)-docosahexaenoate + reduced [NADPH--hemoprotein reductase] + O2 = 21-hydroxy-(4Z,7Z,10Z,13Z,16Z,19Z)-docosahexaenoate + oxidized [NADPH--hemoprotein reductase] + H2O + H(+). It catalyses the reaction dodecanoate + reduced [NADPH--hemoprotein reductase] + O2 = 11-hydroxydodecanoate + oxidized [NADPH--hemoprotein reductase] + H2O + H(+). The enzyme catalyses tetradecanoate + reduced [NADPH--hemoprotein reductase] + O2 = 13-hydroxytetradecanoate + oxidized [NADPH--hemoprotein reductase] + H2O + H(+). It carries out the reaction 4-nitrophenol + NADPH + O2 + H(+) = 4-nitrocatechol + NADP(+) + H2O. The protein operates within lipid metabolism; fatty acid metabolism. With respect to regulation, the omega-1 hydroxylase activity is stimulated by cytochrome b5. Functionally, a cytochrome P450 monooxygenase involved in the metabolism of fatty acids. Mechanistically, uses molecular oxygen inserting one oxygen atom into a substrate, and reducing the second into a water molecule, with two electrons provided by NADPH via cytochrome P450 reductase (NADPH--hemoprotein reductase). Catalyzes the hydroxylation of carbon-hydrogen bonds. Hydroxylates fatty acids specifically at the omega-1 position displaying the highest catalytic activity for saturated fatty acids. May be involved in the oxidative metabolism of xenobiotics. In Oryctolagus cuniculus (Rabbit), this protein is Cytochrome P450 2E1 (CYP2E1).